A 734-amino-acid chain; its full sequence is Photosystem I P700 chlorophyll a apoprotein A2 (734 aa).

8 helical membrane passes run 46–69, 135–158, 175–199, 273–291, 330–353, 369–395, 417–439, and 517–535; these read IFASHFGQLAIIFLWTSGNLFHVA, LYTGALFLLLLSAISLIASWLHLQ, LNHHLSGLFGVSSLAWTGHLVHVAI, IAHHHLAIAFLFLVAGHMY, LHFQLGLALASLGVITSLVAQHMY, AALYTHHQYIAGFIMTGAFAHGAIFFI, AITSHLSWASLFLGFHTLGLYVH, and FLVHHAIALGLHTTTLILV. Residues Cys-559 and Cys-568 each coordinate [4Fe-4S] cluster. The next 2 helical transmembrane spans lie at 575-596 and 643-665; these read AFYLAVFWMLNTIGWVTFYWHW and LSVWAWMFLFGHLVWATGFMFLI. 3 residues coordinate chlorophyll a: His-654, Met-662, and Tyr-670. Trp-671 is a phylloquinone binding site. The helical transmembrane segment at 707–727 threads the bilayer; the sequence is LVGLVHFSVGYIFTYAAFLIA.

The protein belongs to the PsaA/PsaB family. As to quaternary structure, the PsaA/B heterodimer binds the P700 chlorophyll special pair and subsequent electron acceptors. PSI consists of a core antenna complex that captures photons, and an electron transfer chain that converts photonic excitation into a charge separation. The eukaryotic PSI reaction center is composed of at least 11 subunits. It depends on P700 is a chlorophyll a/chlorophyll a' dimer, A0 is one or more chlorophyll a, A1 is one or both phylloquinones and FX is a shared 4Fe-4S iron-sulfur center. as a cofactor.

The protein resides in the plastid. The protein localises to the chloroplast thylakoid membrane. It catalyses the reaction reduced [plastocyanin] + hnu + oxidized [2Fe-2S]-[ferredoxin] = oxidized [plastocyanin] + reduced [2Fe-2S]-[ferredoxin]. Its function is as follows. PsaA and PsaB bind P700, the primary electron donor of photosystem I (PSI), as well as the electron acceptors A0, A1 and FX. PSI is a plastocyanin-ferredoxin oxidoreductase, converting photonic excitation into a charge separation, which transfers an electron from the donor P700 chlorophyll pair to the spectroscopically characterized acceptors A0, A1, FX, FA and FB in turn. Oxidized P700 is reduced on the lumenal side of the thylakoid membrane by plastocyanin. This Phalaenopsis aphrodite subsp. formosana (Moth orchid) protein is Photosystem I P700 chlorophyll a apoprotein A2.